The chain runs to 648 residues: Activatory protein CHA4 (648 aa).

Pro residues predominate over residues 1–10; sequence MMLEPSPPPL. The tract at residues 1 to 37 is disordered; that stretch reads MMLEPSPPPLTTTVTPSLPSSLKKSVTDNDQNNNNVP. The span at 11-22 shows a compositional bias: low complexity; that stretch reads TTTVTPSLPSSL. The zn(2)-C6 fungal-type DNA-binding region spans 44–70; that stretch reads CQNCRRRRRKCNMEKPCSNCIKFRTEC. A disordered region spans residues 140 to 177; the sequence is AQSALPSSESNDENESDAFTKKMPSESPPPVGTNSIYP. Residues S164 and S166 each carry the phosphoserine modification.

The protein resides in the nucleus. Its function is as follows. Activates the CHA1 gene for L-serine dehydratase. Binds to the DNA sequence 5'-GVGGARAYRTRATTCCRC-3'. The protein is Activatory protein CHA4 (CHA4) of Saccharomyces cerevisiae (strain ATCC 204508 / S288c) (Baker's yeast).